Reading from the N-terminus, the 442-residue chain is uncharacterized protein (442 aa).

Positions 211–269 (LDYSTDKPEDSESEDIELEDSESEDSESEDIDQHGGQGPDDDEFNANFDDPQFDEFDFG) are disordered. Residues 221-240 (SESEDIELEDSESEDSESED) are compositionally biased toward acidic residues.

It is found in the virion. This is an uncharacterized protein from Acanthamoeba polyphaga (Amoeba).